Consider the following 144-residue polypeptide: Snake venom vascular endothelial growth factor toxin VR-1 (144 aa).

A signal peptide spans 1-24 (MAAYLLAVAILFCIQGWPSGTVQG). Gln-25 is subject to Pyrrolidone carboxylic acid. 3 disulfide bridges follow: Cys-38–Cys-80, Cys-69–Cys-115, and Cys-73–Cys-117. Over residues 120 to 134 (RWKQGEPEGPKEPRR) the composition is skewed to basic and acidic residues. The segment at 120–144 (RWKQGEPEGPKEPRRGGVRAKFPFD) is disordered. A propeptide spanning residues 134–144 (RGGVRAKFPFD) is cleaved from the precursor.

This sequence belongs to the PDGF/VEGF growth factor family. Snake venom VEGF subfamily. As to quaternary structure, homodimer; disulfide-linked. Interacts with VEGF receptor-2 (KDR) with high affinity, but not with VEGF receptor-1 (Flt-1), VEGF receptor-3 (FLT4), and neuropilin-1 (NRP1). In terms of tissue distribution, expressed by the venom gland.

The protein localises to the secreted. Snake venom VEGFs may contribute to venom dispersion and prey subjugation by inducing vascular permeability and hypotension. This protein induces angiogenesis probably through VEGF receptor (KDR/VEGFR-2) signaling, as well as drastic hypotension. The hypotension is mediated by nitric oxide, which is produced by VEGF-activated endothelium NO synthase. May also induce vascular permeability. This Daboia russelii (Russel's viper) protein is Snake venom vascular endothelial growth factor toxin VR-1.